Here is an 819-residue protein sequence, read N- to C-terminus: Leucine--tRNA ligase (819 aa).

The 'HIGH' region signature appears at 41–51; sequence PYPSGTLHVGH. Residues 578 to 582 carry the 'KMSKS' region motif; it reads KMSKS. K581 is a binding site for ATP.

The protein belongs to the class-I aminoacyl-tRNA synthetase family.

It localises to the cytoplasm. The catalysed reaction is tRNA(Leu) + L-leucine + ATP = L-leucyl-tRNA(Leu) + AMP + diphosphate. The protein is Leucine--tRNA ligase of Fervidobacterium nodosum (strain ATCC 35602 / DSM 5306 / Rt17-B1).